Consider the following 155-residue polypeptide: 3-hydroxyacyl-[acyl-carrier-protein] dehydratase FabZ (155 aa).

The active site involves H57.

Belongs to the thioester dehydratase family. FabZ subfamily.

Its subcellular location is the cytoplasm. It carries out the reaction a (3R)-hydroxyacyl-[ACP] = a (2E)-enoyl-[ACP] + H2O. Its function is as follows. Involved in unsaturated fatty acids biosynthesis. Catalyzes the dehydration of short chain beta-hydroxyacyl-ACPs and long chain saturated and unsaturated beta-hydroxyacyl-ACPs. The sequence is that of 3-hydroxyacyl-[acyl-carrier-protein] dehydratase FabZ from Cereibacter sphaeroides (strain ATCC 17025 / ATH 2.4.3) (Rhodobacter sphaeroides).